We begin with the raw amino-acid sequence, 119 residues long: Beta-2-microglobulin (119 aa).

The first 20 residues, 1 to 20 (MARSVTVIFLVLVSLAVVLA), serve as a signal peptide directing secretion. Positions 25–114 (PQIQVYSRHP…VTLKEPKTVT (90 aa)) constitute an Ig-like C1-type domain. A disulfide bond links Cys-45 and Cys-100.

Belongs to the beta-2-microglobulin family. Heterodimer of an alpha chain and a beta chain. Beta-2-microglobulin is the beta-chain of major histocompatibility complex class I molecules. Forms a heterotrimer with MR1 and a metabolite antigen.

The protein resides in the secreted. Component of the class I major histocompatibility complex (MHC). Involved in the presentation of peptide antigens to the immune system. The chain is Beta-2-microglobulin (B2m) from Rattus norvegicus (Rat).